The sequence spans 700 residues: mRNA cap guanine-N(7) methyltransferase (700 aa).

Basic and acidic residues-rich tracts occupy residues 1-10 (MVYDPIRDCD) and 52-67 (EPPR…ESHR). Disordered stretches follow at residues 1-263 (MVYD…SVLR) and 277-392 (AHAN…ERNK). Polar residues predominate over residues 113 to 128 (RSPSMSLSPRSQNQSL). 2 stretches are compositionally biased toward low complexity: residues 129 to 144 (PYPS…SAHP) and 220 to 241 (PQPT…TPHH). One can recognise an mRNA cap 0 methyltransferase domain in the interval 429–700 (SPIIGLKKFN…LYMGFAFEKM (272 aa)). 438-439 (NN) contributes to the mRNA binding site. S-adenosyl-L-methionine contacts are provided by Lys-442, Gly-461, Asp-483, Asp-512, Gln-538, and Tyr-543.

The protein belongs to the class I-like SAM-binding methyltransferase superfamily. mRNA cap 0 methyltransferase family.

It localises to the nucleus. It carries out the reaction a 5'-end (5'-triphosphoguanosine)-ribonucleoside in mRNA + S-adenosyl-L-methionine = a 5'-end (N(7)-methyl 5'-triphosphoguanosine)-ribonucleoside in mRNA + S-adenosyl-L-homocysteine. In terms of biological role, responsible for methylating the 5'-cap structure of mRNAs. The protein is mRNA cap guanine-N(7) methyltransferase (ABD1) of Cryptococcus neoformans var. neoformans serotype D (strain B-3501A) (Filobasidiella neoformans).